An 810-amino-acid polypeptide reads, in one-letter code: DNA ligase (810 aa).

Residues 46 to 50, 95 to 96, and Glu-129 each bind NAD(+); these read DAEYD and SL. Lys-131 functions as the N6-AMP-lysine intermediate in the catalytic mechanism. Positions 152, 189, 305, and 329 each coordinate NAD(+). Zn(2+) contacts are provided by Cys-434, Cys-437, Cys-458, and Cys-464. The tract at residues 528-548 is disordered; sequence ERRAESGTAEPPKKAAKKKGD. Positions 731-810 constitute a BRCT domain; it reads AAASTFAGKT…DDWLAMVAQG (80 aa).

It belongs to the NAD-dependent DNA ligase family. LigA subfamily. The cofactor is Mg(2+). Requires Mn(2+) as cofactor.

The catalysed reaction is NAD(+) + (deoxyribonucleotide)n-3'-hydroxyl + 5'-phospho-(deoxyribonucleotide)m = (deoxyribonucleotide)n+m + AMP + beta-nicotinamide D-nucleotide.. Its function is as follows. DNA ligase that catalyzes the formation of phosphodiester linkages between 5'-phosphoryl and 3'-hydroxyl groups in double-stranded DNA using NAD as a coenzyme and as the energy source for the reaction. It is essential for DNA replication and repair of damaged DNA. This is DNA ligase from Methylobacterium radiotolerans (strain ATCC 27329 / DSM 1819 / JCM 2831 / NBRC 15690 / NCIMB 10815 / 0-1).